The sequence spans 484 residues: tRNA sulfurtransferase (484 aa).

A THUMP domain is found at 61–166 (PHLIELLQCI…DKLLFIQARH (106 aa)). ATP contacts are provided by residues 183–184 (LI), K265, G287, and Q296. C344 and C456 are oxidised to a cystine. A Rhodanese domain is found at 404–483 (LGENDVILDI…FNNVQVFVKA (80 aa)). C456 (cysteine persulfide intermediate) is an active-site residue.

The protein belongs to the ThiI family.

It is found in the cytoplasm. It carries out the reaction [ThiI sulfur-carrier protein]-S-sulfanyl-L-cysteine + a uridine in tRNA + 2 reduced [2Fe-2S]-[ferredoxin] + ATP + H(+) = [ThiI sulfur-carrier protein]-L-cysteine + a 4-thiouridine in tRNA + 2 oxidized [2Fe-2S]-[ferredoxin] + AMP + diphosphate. The enzyme catalyses [ThiS sulfur-carrier protein]-C-terminal Gly-Gly-AMP + S-sulfanyl-L-cysteinyl-[cysteine desulfurase] + AH2 = [ThiS sulfur-carrier protein]-C-terminal-Gly-aminoethanethioate + L-cysteinyl-[cysteine desulfurase] + A + AMP + 2 H(+). Its pathway is cofactor biosynthesis; thiamine diphosphate biosynthesis. Its function is as follows. Catalyzes the ATP-dependent transfer of a sulfur to tRNA to produce 4-thiouridine in position 8 of tRNAs, which functions as a near-UV photosensor. Also catalyzes the transfer of sulfur to the sulfur carrier protein ThiS, forming ThiS-thiocarboxylate. This is a step in the synthesis of thiazole, in the thiamine biosynthesis pathway. The sulfur is donated as persulfide by IscS. This is tRNA sulfurtransferase from Actinobacillus succinogenes (strain ATCC 55618 / DSM 22257 / CCUG 43843 / 130Z).